Here is a 154-residue protein sequence, read N- to C-terminus: Protein LOL1 (154 aa).

Putative zinc finger stretches follow at residues 34–64 (QLVC…VTAV), 73–103 (QLVC…VNLA), and 111–141 (HVNC…VTSV).

It is found in the nucleus. Functionally, positive regulator of reactive oxygen-induced cell death. May be involved in the repression of the copper/zinc superoxide dismutase CSD1 and CSD2 that detoxify accumulating superoxide before the reactive oxygen species (ROS) can trigger a cell death cascade. LSD1 and LOL1 have antagonistic effects on CSD1 and CSD2 accumulation to regulate oxidative stress-induced cell death. The chain is Protein LOL1 (LOL1) from Arabidopsis thaliana (Mouse-ear cress).